The primary structure comprises 770 residues: Amyloid-beta precursor protein (770 aa).

Positions 1-17 are cleaved as a signal peptide; sequence MLPSLALLLLAAWTVRA. The Extracellular portion of the chain corresponds to 18–701; the sequence is LEVPTDGNAG…AEDVGSNKGA (684 aa). Residues 28–123 are GFLD subdomain; sequence LLAEPQIAMF…PYRCLVGEFV (96 aa). Residues 28–189 form the E1 domain; sequence LLAEPQIAMF…RGVEFVCCPL (162 aa). 6 disulfide bridges follow: Cys-38–Cys-62, Cys-73–Cys-117, Cys-98–Cys-105, Cys-133–Cys-187, Cys-144–Cys-174, and Cys-158–Cys-186. Residue 96–110 coordinates heparin; sequence NWCKRGRKQCKTHTH. The interval 131-189 is cuBD subdomain; the sequence is DKCKFLHQERMDVCETHLHWHTVAKETCSEKSTNLHDYGMLLPCGIDKFRGVEFVCCPL. The tract at residues 135-155 is copper-binding; the sequence is FLHQERMDVCETHLHWHTVAK. Residues His-147, His-151, and Tyr-168 each coordinate Cu(2+). Positions 181-188 are zinc-binding; the sequence is GVEFVCCP. Zn(2+) is bound by residues Glu-183, Cys-186, and Cys-187. The segment covering 196–207 has biased composition (acidic residues); it reads IDSADAEEDDSD. The segment at 196–283 is disordered; it reads IDSADAEEDD…TTTTTTTESV (88 aa). Phosphoserine; by CK2 is present on Ser-198. Ser-206 carries the phosphoserine; by CK1 modification. Sulfotyrosine is present on residues Tyr-217 and Tyr-262. The span at 228-264 shows a compositional bias: acidic residues; that stretch reads VAEEEEVADVEEEEAEDDEDVEDGDEVEEEAEEPYEE. The segment covering 268–281 has biased composition (low complexity); it reads RTTSIATTTTTTTE. 3 cysteine pairs are disulfide-bonded: Cys-291-Cys-341, Cys-300-Cys-324, and Cys-316-Cys-337. One can recognise a BPTI/Kunitz inhibitor domain in the interval 291 to 341; the sequence is CSEQAETGPCRAMISRWYFDVTEGKCAPFFYGGCGGNRNNFDTEEYCMAVC. Tyr-336 is modified (sulfotyrosine). An OX-2 motif is present at residues 344–365; the sequence is VSSQSLLKTTSEPLPQDPVKLP. Positions 374-565 constitute an E2 domain; it reads AVDKYLETPG…EEIQDEVDEL (192 aa). The interval 391 to 423 is heparin-binding; sequence FQKAKERLEAKHRERMSQVMREWEEAERQAKNL. Ser-441 is modified (phosphoserine). Residues 491–522 are heparin-binding; that stretch reads FNMLKKYVRAEQKDRQHTLKHFEHVRMVDPKK. Phosphotyrosine is present on Tyr-497. The segment at 523–540 is collagen-binding; the sequence is AAQIRSQVMTHLRVIYER. Residues Asn-542 and Asn-571 are each glycosylated (N-linked (GlcNAc...) asparagine). An O-linked (Xyl...) (chondroitin sulfate) serine; in L-APP isoforms glycan is attached at Ser-656. The Cu(2+) site is built by His-677 and His-685. Positions 677 and 685 each coordinate Zn(2+). The tract at residues 695 to 722 is interaction with PSEN1; that stretch reads VGSNKGAIIGLMVGGVVIATVIVITLVM. Residues 702 to 722 traverse the membrane as a helical segment; the sequence is IIGLMVGGVVIATVIVITLVM. The Cytoplasmic portion of the chain corresponds to 723-770; it reads LKKKQYTSIHHGVVEVDAAVTPEERHLSKMQQNGYENPTYKFFEQMQN. Positions 724–734 match the Basolateral sorting signal motif; the sequence is KKKQYTSIHHG. At Thr-729 the chain carries Phosphothreonine. Residue Ser-730 is modified to Phosphoserine; by APP-kinase I. An interaction with G(o)-alpha region spans residues 732–751; sequence HHGVVEVDAAVTPEERHLSK. Thr-743 is modified (phosphothreonine; by CDK5 and MAPK10). The required for the interaction with KIF5B and for anterograde transport in axons stretch occupies residues 756–770; it reads GYENPTYKFFEQMQN. Position 757 is a phosphotyrosine; by ABL1 (Tyr-757). The short motif at 757–762 is the YENPXY motif; contains endocytosis signal element; sequence YENPTY. Lys-763 is covalently cross-linked (Glycyl lysine isopeptide (Lys-Gly) (interchain with G-Cter in ubiquitin)).

Belongs to the APP family. In terms of assembly, binds, via its C-terminus, to the PID domain of several cytoplasmic proteins, including APBB family members, the APBA family, MAPK8IP1, SHC1 and NUMB and DAB1. Binding to DAB1 inhibits its serine phosphorylation. Interacts (via NPXY motif) with DAB2 (via PID domain); the interaction is impaired by tyrosine phosphorylation of the NPXY motif. Also interacts with GPCR-like protein BPP, APPBP1, IB1, KNS2 (via its TPR domains), APPBP2 (via BaSS) and DDB1. In vitro, it binds MAPT via the MT-binding domains. Associates with microtubules in the presence of ATP and in a kinesin-dependent manner. Interacts, through a C-terminal domain, with GNAO1. Amyloid-beta protein 42 binds CHRNA7 in hippocampal neurons. Amyloid-beta associates with HADH2. Interacts with CPEB1, ANKS1B and AGER. Interacts with ITM2B. Interacts with ITM2C. Interacts with IDE. Can form homodimers; dimerization is enhanced in the presence of Cu(2+) ions. Can form homodimers; this is promoted by heparin binding. Amyloid-beta protein 40 interacts with S100A9. CTF-alpha product of APP interacts with GSAP. Isoform APP695 interacts with SORL1 (via N-terminal ectodomain); this interaction retains APP in the trans-Golgi network and reduces processing into soluble APP-alpha and amyloid-beta peptides. The C99 fragment also interacts with SORL1. Isoform APP751 interacts with SORL1. Isoform APP770 interacts with SORL1. Interacts with PLD3. Interacts with VDAC1. Interacts with NSG1; could regulate APP processing. Amyloid-beta protein 42 interacts with FPR2. Interacts with SYT7. Interacts (via transmembrane region) with PSEN1; the interaction is direct. Interacts with LRRK2. Interacts (via cytoplasmic domain) with KIF5B. Interacts (via C-terminus) with APBB2/FE65L1 (via C-terminus). Interacts (via intracellular domain) with APBB3. Proteolytically processed under normal cellular conditions. Cleavage either by alpha-secretase, beta-secretase or theta-secretase leads to generation and extracellular release of soluble APP peptides, S-APP-alpha and S-APP-beta, and the retention of corresponding membrane-anchored C-terminal fragments, C80, C83 and C99. Subsequent processing of C80 and C83 by gamma-secretase yields P3 peptides. This is the major secretory pathway and is non-amyloidogenic. Alternatively, presenilin/nicastrin-mediated gamma-secretase processing of C99 releases the amyloid-beta proteins, amyloid-beta protein 40 and amyloid-beta protein 42, major components of amyloid plaques, and the cytotoxic C-terminal fragments, gamma-CTF(50), gamma-CTF(57) and gamma-CTF(59). PSEN1 cleavage is more efficient with C83 than with C99 as substrate (in vitro). Amyloid-beta protein 40 and Amyloid-beta protein 42 are cleaved by ACE. Many other minor amyloid-beta peptides, amyloid-beta 1-X peptides, are found in cerebral spinal fluid (CSF) including the amyloid-beta X-15 peptides, produced from the cleavage by alpha-secretase. In terms of processing, proteolytically cleaved by caspases during neuronal apoptosis. Cleavage at Asp-739 by either caspase-3, -8 or -9 results in the production of the neurotoxic C31 peptide and the increased production of amyloid-beta peptides. Post-translationally, N-glycosylated. O-glycosylated. O-linkage of chondroitin sulfate to the L-APP isoforms produces the APP proteoglycan core proteins, the appicans. The chondroitin sulfate chain of appicans contains 4-O-sulfated galactose in the linkage region and chondroitin sulfate E in the repeated disaccharide region. In terms of processing, phosphorylation in the C-terminal on tyrosine, threonine and serine residues is neuron-specific. Phosphorylation can affect APP processing, neuronal differentiation and interaction with other proteins. Phosphorylated on Thr-743 in neuronal cells by Cdc5 kinase and Mapk10, in dividing cells by Cdc2 kinase in a cell-cycle dependent manner with maximal levels at the G2/M phase and, in vitro, by GSK-3-beta. The Thr-743 phosphorylated form causes a conformational change which reduces binding of Fe65 family members. In dopaminergic (DA) neurons, phosphorylation on Thr-743 by LRKK2 promotes the production and the nuclear translocation of the APP intracellular domain (AICD) which induces DA neuron apoptosis. Phosphorylation on Tyr-757 is required for SHC binding. Phosphorylated in the extracellular domain by casein kinases on both soluble and membrane-bound APP. This phosphorylation is inhibited by heparin. Post-translationally, extracellular binding and reduction of copper, results in a corresponding oxidation of Cys-144 and Cys-158, and the formation of a disulfide bond. Trophic-factor deprivation triggers the cleavage of surface APP by beta-secretase to release sAPP-beta which is further cleaved to release an N-terminal fragment of APP (N-APP). In terms of processing, amyloid-beta peptides are degraded by IDE. Post-translationally, sulfated on tyrosine residues. In terms of tissue distribution, expressed in the brain. In the brain, non-L-APP isoforms are expressed in neurons, isoform APP695 being the predominant form. In astrocytes and microglial cells, almost 50% is L-isoform (appican).

It localises to the cell membrane. It is found in the membrane. The protein resides in the perikaryon. The protein localises to the cell projection. Its subcellular location is the growth cone. It localises to the clathrin-coated pit. It is found in the early endosome. The protein resides in the cytoplasmic vesicle. The protein localises to the endoplasmic reticulum. Its subcellular location is the golgi apparatus. It localises to the cell surface. It is found in the nucleus. The protein resides in the cytoplasm. The protein localises to the secreted. In terms of biological role, functions as a cell surface receptor and performs physiological functions on the surface of neurons relevant to neurite growth, neuronal adhesion and axonogenesis. Interaction between APP molecules on neighboring cells promotes synaptogenesis. Involved in cell mobility and transcription regulation through protein-protein interactions. Can promote transcription activation through binding to APBB1-KAT5 and inhibit Notch signaling through interaction with Numb. Couples to apoptosis-inducing pathways such as those mediated by G(o) and JIP. Inhibits G(o)-alpha ATPase activity. Acts as a kinesin I membrane receptor, mediating the axonal transport of beta-secretase and presenilin 1. By acting as a kinesin I membrane receptor, plays a role in axonal anterograde transport of cargo towards synapses in axons. May be involved in copper homeostasis/oxidative stress through copper ion reduction. Can regulate neurite outgrowth through binding to components of the extracellular matrix such as heparin and collagen I and IV. The splice isoforms that contain the BPTI domain possess protease inhibitor activity. Induces a AGER-dependent pathway that involves activation of p38 MAPK, resulting in internalization of amyloid-beta peptide and leading to mitochondrial dysfunction in cultured mitochondrial dysfunction in cultured cortical neurons. Provides Cu(2+) ions for GPC1 which are required for release of nitric oxide (NO) and subsequent degradation of the heparan sulfate chains on GPC1. Its function is as follows. Amyloid-beta peptides are lipophilic metal chelators with metal-reducing activity. Binds transient metals such as copper, zinc and iron. Rat and mouse amyloid-beta peptides bind only weakly transient metals and have little reducing activity due to substitutions of transient metal chelating residues. Amyloid-beta protein 42 may activate mononuclear phagocytes in the brain and elicits inflammatory responses. Promotes both tau aggregation and TPK II-mediated phosphorylation. Also binds GPC1 in lipid rafts. Appicans elicit adhesion of neural cells to the extracellular matrix and may regulate neurite outgrowth in the brain. Functionally, the gamma-CTF peptides as well as the caspase-cleaved peptides, including C31, are potent enhancers of neuronal apoptosis. The protein is Amyloid-beta precursor protein of Rattus norvegicus (Rat).